A 226-amino-acid chain; its full sequence is DNA mismatch repair protein MutH (226 aa).

Belongs to the MutH family.

The protein localises to the cytoplasm. Sequence-specific endonuclease that cleaves unmethylated GATC sequences. It is involved in DNA mismatch repair. This is DNA mismatch repair protein MutH from Haemophilus ducreyi (strain 35000HP / ATCC 700724).